The primary structure comprises 462 residues: Probable peptidoglycan glycosyltransferase FtsW (462 aa).

The interval 1–28 (MREPRHVPQLRASGRRFPQRGRRHRFGK) is disordered. At 1–92 (MREPRHVPQL…RSRMLDFDYS (92 aa)) the chain is on the cytoplasmic side. Over residues 13-27 (SGRRFPQRGRRHRFG) the composition is skewed to basic residues. Residues 93–113 (LLWVSIALLGLGVVMVYSASI) traverse the membrane as a helical segment. Residues 114 to 127 (AMPDSPKYASYHDY) are Periplasmic-facing. A helical transmembrane segment spans residues 128–148 (AFLLRHCVSLVVAFVAAVIAF). Topologically, residues 149 to 158 (RVPVSTWDKY) are cytoplasmic. Residues 159–179 (APHLFLIALVGLVIVLIPHIG) traverse the membrane as a helical segment. The Periplasmic segment spans residues 180–192 (KGVNGARRWIPLG). The helical transmembrane segment at 193-215 (ITNMQPSEIMKLAVTIYAANYTV) threads the bilayer. Topologically, residues 216 to 223 (RKQEYMQS) are cytoplasmic. The helical transmembrane segment at 224–244 (FAKGFLPMAFAVGLVGALLLL) threads the bilayer. The Periplasmic portion of the chain corresponds to 245–247 (EPD). A helical membrane pass occupies residues 248-268 (MGAFMVVAAIAMGVLFLGGVN). Over 269–270 (GK) the chain is Cytoplasmic. The chain crosses the membrane as a helical span at residues 271 to 291 (LFGGLVATAVGTFTMLVWLSP). Residues 292–349 (WRRERIFAYLDPWDERYAQGKAYQLTHSLIAFGRGEWFGVGLGGSVEKLNYLPEAHTD) are Periplasmic-facing. The chain crosses the membrane as a helical span at residues 350 to 370 (FILAVIGEELGFVGVLVVILL). The Cytoplasmic portion of the chain corresponds to 371–398 (FYWIVRRSFEIGRQALALDRTFAGLMAK). A helical membrane pass occupies residues 399-419 (GVGIWFGAQAFINMGVNLGLL). At 420–425 (PTKGLT) the chain is on the periplasmic side. The chain crosses the membrane as a helical span at residues 426 to 446 (LPLVSYGGSGILLNCISLAVL). Over 447-462 (LRVDYENRVLMRGGKV) the chain is Cytoplasmic.

This sequence belongs to the SEDS family. FtsW subfamily.

It localises to the cell inner membrane. It carries out the reaction [GlcNAc-(1-&gt;4)-Mur2Ac(oyl-L-Ala-gamma-D-Glu-L-Lys-D-Ala-D-Ala)](n)-di-trans,octa-cis-undecaprenyl diphosphate + beta-D-GlcNAc-(1-&gt;4)-Mur2Ac(oyl-L-Ala-gamma-D-Glu-L-Lys-D-Ala-D-Ala)-di-trans,octa-cis-undecaprenyl diphosphate = [GlcNAc-(1-&gt;4)-Mur2Ac(oyl-L-Ala-gamma-D-Glu-L-Lys-D-Ala-D-Ala)](n+1)-di-trans,octa-cis-undecaprenyl diphosphate + di-trans,octa-cis-undecaprenyl diphosphate + H(+). The protein operates within cell wall biogenesis; peptidoglycan biosynthesis. Its function is as follows. Peptidoglycan polymerase that is essential for cell division. The sequence is that of Probable peptidoglycan glycosyltransferase FtsW from Burkholderia thailandensis (strain ATCC 700388 / DSM 13276 / CCUG 48851 / CIP 106301 / E264).